The sequence spans 1005 residues: DNA double-strand break repair Rad50 ATPase (1005 aa).

ATP contacts are provided by residues lysine 14, 35–40, 62–64, and glutamine 134; these read GSGKSS and ITK. 4 coiled-coil regions span residues 189 to 230, 292 to 321, 346 to 379, and 404 to 498; these read KENY…IEKL, LVDE…KQLE, LDTL…EIEK, and AVEY…LKEV. Positions 457–554 constitute a Zinc-hook domain; the sequence is IEEKKKVLEN…DIEKLKKEID (98 aa). The Zn(2+) site is built by cysteine 502 and cysteine 505. Coiled-coil stretches lie at residues 523 to 600, 656 to 692, and 800 to 834; these read TQLN…YVIN, KEKC…ELIE, and RQEL…LKEM.

The protein belongs to the SMC family. RAD50 subfamily. Homodimer. Forms a heterotetramer composed of two Mre11 subunits and two Rad50 subunits. Zn(2+) serves as cofactor.

In terms of biological role, part of the Rad50/Mre11 complex, which is involved in the early steps of DNA double-strand break (DSB) repair. The complex may facilitate opening of the processed DNA ends to aid in the recruitment of HerA and NurA. Rad50 controls the balance between DNA end bridging and DNA resection via ATP-dependent structural rearrangements of the Rad50/Mre11 complex. The sequence is that of DNA double-strand break repair Rad50 ATPase from Methanocaldococcus jannaschii (strain ATCC 43067 / DSM 2661 / JAL-1 / JCM 10045 / NBRC 100440) (Methanococcus jannaschii).